The chain runs to 88 residues: UPF0250 protein Shewmr4_0986 (88 aa).

It belongs to the UPF0250 family.

This chain is UPF0250 protein Shewmr4_0986, found in Shewanella sp. (strain MR-4).